The sequence spans 609 residues: ATP-dependent lipid A-core flippase (609 aa).

6 helical membrane passes run 47–67, 88–108, 167–187, 190–210, 279–299, and 305–325; these read LLAA…IYLI, ILML…VGSF, AIIT…VMFV, WQLS…ISII, VIQI…AIFG, and GSSW…AAIL. One can recognise an ABC transmembrane type-1 domain in the interval 47-340; that stretch reads LLAAIGSIFF…LTKVNVVIQK (294 aa). The ABC transporter domain maps to 372 to 606; the sequence is VTIKDLSFAF…GGLYTRLYQS (235 aa). Residue 404-411 coordinates ATP; that stretch reads GKSGSGKT.

This sequence belongs to the ABC transporter superfamily. Lipid exporter (TC 3.A.1.106) family. Homodimer.

It is found in the cell inner membrane. The enzyme catalyses ATP + H2O + lipid A-core oligosaccharideSide 1 = ADP + phosphate + lipid A-core oligosaccharideSide 2.. Involved in lipopolysaccharide (LPS) biosynthesis. Translocates lipid A-core from the inner to the outer leaflet of the inner membrane. Transmembrane domains (TMD) form a pore in the inner membrane and the ATP-binding domain (NBD) is responsible for energy generation. The chain is ATP-dependent lipid A-core flippase from Francisella tularensis subsp. holarctica (strain LVS).